Reading from the N-terminus, the 194-residue chain is GTP cyclohydrolase 1 (194 aa).

Residues C83, H86, and C155 each contribute to the Zn(2+) site.

It belongs to the GTP cyclohydrolase I family. Homomer.

The catalysed reaction is GTP + H2O = 7,8-dihydroneopterin 3'-triphosphate + formate + H(+). It participates in cofactor biosynthesis; 7,8-dihydroneopterin triphosphate biosynthesis; 7,8-dihydroneopterin triphosphate from GTP: step 1/1. This is GTP cyclohydrolase 1 from Streptococcus pyogenes serotype M49 (strain NZ131).